Consider the following 201-residue polypeptide: MFITFEGGEGSGKTTLIEKLKHTLLEKKYDVLTTREPGGSKVAEKIRSVLLDNKNTEITAHTEALLFAASRAQHLDEVIIPNLDKVILCDRYIDSSYAYQAFGRNLGMEFVQSINSYALKYLPDLTFYIDLDPKTGIDRVKKNRLHKTDRLDMEVQTFHQKVREGYIRISEMFKERIVVIDGNQSIDAIYQIIMDNILKRL.

7–14 lines the ATP pocket; sequence GGEGSGKT.

Belongs to the thymidylate kinase family.

It carries out the reaction dTMP + ATP = dTDP + ADP. Phosphorylation of dTMP to form dTDP in both de novo and salvage pathways of dTTP synthesis. The polypeptide is Thymidylate kinase (Acholeplasma laidlawii (strain PG-8A)).